The primary structure comprises 342 residues: Homocysteine S-methyltransferase 4 (342 aa).

One can recognise a Hcy-binding domain in the interval 13 to 328 (ALRGFVREAG…ATVRAIARAV (316 aa)). Zn(2+) contacts are provided by C245, C313, and C314.

Monomer. The cofactor is Zn(2+).

It carries out the reaction S-methyl-L-methionine + L-homocysteine = 2 L-methionine + H(+). Catalyzes methyl transfer from S-methylmethionine (SMM) to adenosyl-L-homocysteine (AdoMet). SMM degradation (by HMT-1, HMT-2, HMT-3 and HMT-4) and biosynthesis (by MMT1) constitute the SMM cycle in plants, which is probably required to achieve short term control of AdoMet level. This chain is Homocysteine S-methyltransferase 4 (HMT-4), found in Zea mays (Maize).